Here is a 400-residue protein sequence, read N- to C-terminus: Phosphoglycerate kinase (400 aa).

Substrate contacts are provided by residues 22–24, Arg-38, 61–64, Arg-119, and Arg-152; these read DFN and HLGR. ATP contacts are provided by residues Lys-205, Gly-296, Glu-327, and 353–356; that span reads GGDT.

The protein belongs to the phosphoglycerate kinase family. In terms of assembly, monomer.

The protein localises to the cytoplasm. The catalysed reaction is (2R)-3-phosphoglycerate + ATP = (2R)-3-phospho-glyceroyl phosphate + ADP. The protein operates within carbohydrate degradation; glycolysis; pyruvate from D-glyceraldehyde 3-phosphate: step 2/5. This is Phosphoglycerate kinase from Campylobacter jejuni subsp. jejuni serotype O:6 (strain 81116 / NCTC 11828).